The sequence spans 431 residues: Serine--tRNA ligase (431 aa).

Residue 235–237 (TAE) participates in L-serine binding. ATP contacts are provided by residues 266–268 (RRE) and Val-282. Glu-289 lines the L-serine pocket. An ATP-binding site is contributed by 353–356 (EASS). Ser-389 contacts L-serine.

It belongs to the class-II aminoacyl-tRNA synthetase family. Type-1 seryl-tRNA synthetase subfamily. As to quaternary structure, homodimer. The tRNA molecule binds across the dimer.

It localises to the cytoplasm. It catalyses the reaction tRNA(Ser) + L-serine + ATP = L-seryl-tRNA(Ser) + AMP + diphosphate + H(+). It carries out the reaction tRNA(Sec) + L-serine + ATP = L-seryl-tRNA(Sec) + AMP + diphosphate + H(+). It participates in aminoacyl-tRNA biosynthesis; selenocysteinyl-tRNA(Sec) biosynthesis; L-seryl-tRNA(Sec) from L-serine and tRNA(Sec): step 1/1. In terms of biological role, catalyzes the attachment of serine to tRNA(Ser). Is also able to aminoacylate tRNA(Sec) with serine, to form the misacylated tRNA L-seryl-tRNA(Sec), which will be further converted into selenocysteinyl-tRNA(Sec). This is Serine--tRNA ligase from Prosthecochloris aestuarii (strain DSM 271 / SK 413).